The sequence spans 586 residues: Homothallic switching endonuclease (586 aa).

In terms of domain architecture, DOD-type homing endonuclease spans 215-370; it reads MLGLWLGDST…IVHISRSLGM (156 aa).

Rapidly degraded via the ubiquitin-26S proteasome system through two ubiquitin-conjugating enzymes UBC2/RAD6 and UBC3/CDC34.

It is found in the nucleus. Its function is as follows. Initiation of mating type interconversion. This protein is a site-specific endonuclease that cleaves a site in the mat locus on chromosome III. The double-strand break is followed by a unidirectional gene conversion event that replaces the information at the mat locus by information copied from either of the two homologous loci (HMR and HML) that reside at the extremity of the chromosome III. Endonuclease expression takes place in late G1 just before cells enter S phase. This chain is Homothallic switching endonuclease (HO), found in Saccharomyces cerevisiae (strain ATCC 204508 / S288c) (Baker's yeast).